The primary structure comprises 544 residues: T-complex protein 1 subunit gamma (544 aa).

A disulfide bridge connects residues Cys368 and Cys374. Residues 525 to 544 (SKKRGGNEPTNPAAMAQGQE) form a disordered region.

It belongs to the TCP-1 chaperonin family. In terms of assembly, heterooligomeric complex of about 850 to 900 kDa that forms two stacked rings, 12 to 16 nm in diameter.

The protein resides in the cytoplasm. Its function is as follows. Molecular chaperone; assists the folding of proteins upon ATP hydrolysis. Known to play a role, in vitro, in the folding of actin and tubulin. The protein is T-complex protein 1 subunit gamma of Drosophila melanogaster (Fruit fly).